The sequence spans 282 residues: Undecaprenyl-diphosphatase (282 aa).

7 helical membrane-spanning segments follow: residues 1–21 (MTLF…FLPV), 40–60 (GAAF…IYFY), 85–105 (AAMG…GLLF), 117–137 (YWVS…EWSV), 196–216 (FSFL…LYHT), 229–249 (AITA…AFLI), and 258–278 (SIFI…IAAG).

It belongs to the UppP family.

It localises to the cell inner membrane. The catalysed reaction is di-trans,octa-cis-undecaprenyl diphosphate + H2O = di-trans,octa-cis-undecaprenyl phosphate + phosphate + H(+). Its function is as follows. Catalyzes the dephosphorylation of undecaprenyl diphosphate (UPP). Confers resistance to bacitracin. In Chlorobium phaeobacteroides (strain DSM 266 / SMG 266 / 2430), this protein is Undecaprenyl-diphosphatase.